The primary structure comprises 524 residues: MDLVKPEEISHPPMDQLQGLEYCIDSNPPWGEAIALGFEHYILALGTAVMIPSILVPMMGGDDGDKVRVVQTLLFLQGVNTLLQTLFGTRLPTVIGGSYAFMVPIISIIHDSSLTRIEDPQLRFLSTMRAVQGAIIVASSVQIILGFSQMWAICSRFFSPIGMVPVIALTGFGLFNRGFPVVGNCVEIGLPMLILFVIFSQYLKNFQFRQFPVVERFALIIALIIVWAYAHVLTASGAYKHRPHQTQLNCRTDMSNLISSAPWIKIPYPLQWGAPSFDAGHAFAMMAAVLVSLIESTGAFKAAARLASATPPPPHVLSRGIGWQGIGILLNGLFGTLSGSSVSVENIGLLGSTRVGSRRVIQISAGFMIFFSMLGKFGALFASIPFTIFAAVYCVLFGLVASVGLSFLQFTNMNSLRNLFIVGVSLFLGLSIPEYFRDFSMKALHGPAHTNAGWFNDFLNTIFLSSPMVALMVAVFLDNTLDYKETARDRGLPWWAKFRTFKGDSRNEEFYTLPFNLNRFFPPS.

The next 12 membrane-spanning stretches (helical) occupy residues 41-61 (YILALGTAVMIPSILVPMMGG), 69-89 (VVQTLLFLQGVNTLLQTLFGT), 91-111 (LPTVIGGSYAFMVPIISIIHD), 133-153 (GAIIVASSVQIILGFSQMWAI), 155-175 (SRFFSPIGMVPVIALTGFGLF), 179-199 (FPVVGNCVEIGLPMLILFVIF), 217-237 (FALIIALIIVWAYAHVLTASG), 282-302 (AFAMMAAVLVSLIESTGAFKA), 359-379 (RVIQISAGFMIFFSMLGKFGA), 380-400 (LFASIPFTIFAAVYCVLFGLV), 419-439 (LFIVGVSLFLGLSIPEYFRDF), and 457-477 (DFLNTIFLSSPMVALMVAVFL).

Belongs to the nucleobase:cation symporter-2 (NCS2) (TC 2.A.40) family. As to expression, expressed in cotyledons 10 days after imbibition (DAI). Expressed in the minor and major veins of cotyledons and leaves, in the shoot apex and pedicels. Expressed in the root meristems, root tips and lateral root primordia.

The protein resides in the membrane. The sequence is that of Nucleobase-ascorbate transporter 2 (NAT2) from Arabidopsis thaliana (Mouse-ear cress).